The sequence spans 25 residues: Growth-blocking peptide (25 aa).

Cys-7 and Cys-19 are joined by a disulfide. Residue Gln-25 is modified to Glutamine amide.

This sequence belongs to the GBP/PSP1/paralytic peptide family. As to expression, hemolymph.

Its function is as follows. Biogenic peptide that prevents, in lepidopteran, the onset of metamorphosis from larva to pupa. This growth-blocking peptide has repressive activity against juvenile hormone esterase. The sequence is that of Growth-blocking peptide from Cotesia kariyai (Parasitic wasp).